A 277-amino-acid chain; its full sequence is Myelin proteolipid protein (277 aa).

The Cytoplasmic segment spans residues 1 to 10 (MGLLECCARC). 3 S-palmitoyl cysteine lipidation sites follow: cysteine 6, cysteine 7, and cysteine 10. Residues 11–36 (LVGAPFASLVATGLCFFGVALFCGCG) traverse the membrane as a helical segment. The Extracellular segment spans residues 37-59 (HEALTGTEKLIETYFSKNYQDYE). A helical membrane pass occupies residues 60-88 (YLINVIHAFQYVIYGTASFFFLYGALLLA). The Cytoplasmic segment spans residues 89–151 (EGFYTTGAVR…LGKWLGHPDK (63 aa)). Cysteine 109 is lipidated: S-palmitoyl cysteine. Serine 114 carries the phosphoserine modification. Threonine 116 and threonine 118 each carry phosphothreonine. S-palmitoyl cysteine attachment occurs at residues cysteine 139 and cysteine 141. Residues 152 to 178 (FVGITYALTIVWLLVFACSAVPVYIYF) form a helical membrane-spanning segment. The Extracellular segment spans residues 179–238 (NTWTTCQSIAFPSKTSASIGSLCADARMYGVLPWNAFPGKVCGSNLLSICKTAEFQMTFH). Cystine bridges form between cysteine 184–cysteine 228 and cysteine 201–cysteine 220. A lipid anchor (O-palmitoyl serine) is attached at serine 199. A helical transmembrane segment spans residues 239–268 (LFIAAFVGAAATLVSLLTFMIAATYNFAVL). Topologically, residues 269 to 277 (KLMGRGTKF) are cytoplasmic.

The protein belongs to the myelin proteolipid protein family.

The protein localises to the cell membrane. It localises to the myelin membrane. Its function is as follows. This is the major myelin protein from the central nervous system. It plays an important role in the formation or maintenance of the multilamellar structure of myelin. The protein is Myelin proteolipid protein (PLP1) of Canis lupus familiaris (Dog).